The chain runs to 258 residues: MGLAKRIIPCLDIKDGRVVKGVNFVSLRDAGDPVEIARSYNEQGADELVFLDITASVENRDLILHIVEKVASQVFIPLTVGGGVCKAEDVRRLLNAGADKVSINTSAVLNPELIKESADHYGSQCIVIAIDARQTSDGNPESPRWEVFTHGGRKPTGLDAIEWAQKIQSLGAGEILLTSMDRDGTRSGFDLVLTRTISDAVDLPVIASGGVGNLDHLVDGILQGHADAVLAASIFHYGEFSIRQAKEYLLSHGIEVRL.

Residues Asp12 and Asp131 contribute to the active site.

The protein belongs to the HisA/HisF family. As to quaternary structure, heterodimer of HisH and HisF.

The protein resides in the cytoplasm. It carries out the reaction 5-[(5-phospho-1-deoxy-D-ribulos-1-ylimino)methylamino]-1-(5-phospho-beta-D-ribosyl)imidazole-4-carboxamide + L-glutamine = D-erythro-1-(imidazol-4-yl)glycerol 3-phosphate + 5-amino-1-(5-phospho-beta-D-ribosyl)imidazole-4-carboxamide + L-glutamate + H(+). The protein operates within amino-acid biosynthesis; L-histidine biosynthesis; L-histidine from 5-phospho-alpha-D-ribose 1-diphosphate: step 5/9. IGPS catalyzes the conversion of PRFAR and glutamine to IGP, AICAR and glutamate. The HisF subunit catalyzes the cyclization activity that produces IGP and AICAR from PRFAR using the ammonia provided by the HisH subunit. In Nitrosomonas eutropha (strain DSM 101675 / C91 / Nm57), this protein is Imidazole glycerol phosphate synthase subunit HisF.